A 195-amino-acid chain; its full sequence is Nucleoside triphosphate pyrophosphatase (195 aa).

Catalysis depends on Asp-70, which acts as the Proton acceptor.

This sequence belongs to the Maf family. It depends on a divalent metal cation as a cofactor.

The protein resides in the cytoplasm. It carries out the reaction a ribonucleoside 5'-triphosphate + H2O = a ribonucleoside 5'-phosphate + diphosphate + H(+). The catalysed reaction is a 2'-deoxyribonucleoside 5'-triphosphate + H2O = a 2'-deoxyribonucleoside 5'-phosphate + diphosphate + H(+). In terms of biological role, nucleoside triphosphate pyrophosphatase. May have a dual role in cell division arrest and in preventing the incorporation of modified nucleotides into cellular nucleic acids. The protein is Nucleoside triphosphate pyrophosphatase of Microcystis aeruginosa (strain NIES-843 / IAM M-2473).